Reading from the N-terminus, the 518-residue chain is Cytochrome P450 1A1 (518 aa).

Positions 33 to 44 (SKPRVPKGLKRL) are mitochondrial targeting signal. Serine 71 is a glycosylation site (O-linked (GlcNAc) serine). Substrate is bound at residue phenylalanine 228. A heme-binding site is contributed by cysteine 461.

This sequence belongs to the cytochrome P450 family. Interacts with cytosolic chaperones HSP70 and HSP90; this interaction is required for initial targeting to mitochondria. Interacts (via mitochondrial targeting signal) with TOMM40 (via N-terminus); this interaction is required for translocation across the mitochondrial outer membrane. Requires heme as cofactor.

It localises to the endoplasmic reticulum membrane. The protein localises to the mitochondrion inner membrane. Its subcellular location is the microsome membrane. It is found in the cytoplasm. The catalysed reaction is an organic molecule + reduced [NADPH--hemoprotein reductase] + O2 = an alcohol + oxidized [NADPH--hemoprotein reductase] + H2O + H(+). It catalyses the reaction estrone + reduced [NADPH--hemoprotein reductase] + O2 = 2-hydroxyestrone + oxidized [NADPH--hemoprotein reductase] + H2O + H(+). It carries out the reaction estrone + reduced [NADPH--hemoprotein reductase] + O2 = 4-hydroxyestrone + oxidized [NADPH--hemoprotein reductase] + H2O + H(+). The enzyme catalyses estrone + reduced [NADPH--hemoprotein reductase] + O2 = 6alpha-hydroxyestrone + oxidized [NADPH--hemoprotein reductase] + H2O + H(+). The catalysed reaction is estrone + reduced [NADPH--hemoprotein reductase] + O2 = 15alpha-hydroxyestrone + oxidized [NADPH--hemoprotein reductase] + H2O + H(+). It catalyses the reaction estrone + reduced [NADPH--hemoprotein reductase] + O2 = 16alpha-hydroxyestrone + oxidized [NADPH--hemoprotein reductase] + H2O + H(+). It carries out the reaction 17beta-estradiol + reduced [NADPH--hemoprotein reductase] + O2 = 2-hydroxy-17beta-estradiol + oxidized [NADPH--hemoprotein reductase] + H2O + H(+). The enzyme catalyses 17beta-estradiol + reduced [NADPH--hemoprotein reductase] + O2 = 4-hydroxy-17beta-estradiol + oxidized [NADPH--hemoprotein reductase] + H2O + H(+). The catalysed reaction is 17beta-estradiol + reduced [NADPH--hemoprotein reductase] + O2 = 6alpha-hydroxy-17beta-estradiol + oxidized [NADPH--hemoprotein reductase] + H2O + H(+). It catalyses the reaction 17beta-estradiol + reduced [NADPH--hemoprotein reductase] + O2 = 7alpha-hydroxy-17beta-estradiol + oxidized [NADPH--hemoprotein reductase] + H2O + H(+). It carries out the reaction 17beta-estradiol + reduced [NADPH--hemoprotein reductase] + O2 = 15alpha-hydroxy-17beta-estradiol + oxidized [NADPH--hemoprotein reductase] + H2O + H(+). The enzyme catalyses (5Z,8Z,11Z)-eicosatrienoate + reduced [NADPH--hemoprotein reductase] + O2 = 19-hydroxy-(5Z,8Z,11Z)-eicosatrienoate + oxidized [NADPH--hemoprotein reductase] + H2O + H(+). The catalysed reaction is (5Z,8Z,11Z,14Z)-eicosatetraenoate + reduced [NADPH--hemoprotein reductase] + O2 = 16-hydroxy-(5Z,8Z,11Z,14Z)-eicosatetraenoate + oxidized [NADPH--hemoprotein reductase] + H2O + H(+). It catalyses the reaction (5Z,8Z,11Z,14Z)-eicosatetraenoate + reduced [NADPH--hemoprotein reductase] + O2 = 17-hydroxy-(5Z,8Z,11Z,14Z)-eicosatetraenoate + oxidized [NADPH--hemoprotein reductase] + H2O + H(+). It carries out the reaction (5Z,8Z,11Z,14Z)-eicosatetraenoate + reduced [NADPH--hemoprotein reductase] + O2 = 18-hydroxy-(5Z,8Z,11Z,14Z)-eicosatetraenoate + oxidized [NADPH--hemoprotein reductase] + H2O + H(+). The enzyme catalyses (5Z,8Z,11Z,14Z)-eicosatetraenoate + reduced [NADPH--hemoprotein reductase] + O2 = 19-hydroxy-(5Z,8Z,11Z,14Z)-eicosatetraenoate + oxidized [NADPH--hemoprotein reductase] + H2O + H(+). The catalysed reaction is (5Z,8Z,11Z,14Z,17Z)-eicosapentaenoate + reduced [NADPH--hemoprotein reductase] + O2 = 19-hydroxy-(5Z,8Z,11Z,14Z,17Z)-eicosapentaenoate + oxidized [NADPH--hemoprotein reductase] + H2O + H(+). It catalyses the reaction (5Z,8Z,11Z,14Z)-eicosatetraenoate + reduced [NADPH--hemoprotein reductase] + O2 = (8R,9S)-epoxy-(5Z,11Z,14Z)-eicosatrienoate + oxidized [NADPH--hemoprotein reductase] + H2O + H(+). It carries out the reaction (5Z,8Z,11Z,14Z)-eicosatetraenoate + reduced [NADPH--hemoprotein reductase] + O2 = (11R,12S)-epoxy-(5Z,8Z,14Z)-eicosatrienoate + oxidized [NADPH--hemoprotein reductase] + H2O + H(+). The enzyme catalyses (5Z,8Z,11Z,14Z)-eicosatetraenoate + reduced [NADPH--hemoprotein reductase] + O2 = (14S,15R)-epoxy-(5Z,8Z,11Z)-eicosatrienoate + oxidized [NADPH--hemoprotein reductase] + H2O + H(+). The catalysed reaction is (5Z,8Z,11Z,14Z)-eicosatetraenoate + reduced [NADPH--hemoprotein reductase] + O2 = (14R,15S)-epoxy-(5Z,8Z,11Z)-eicosatrienoate + oxidized [NADPH--hemoprotein reductase] + H2O + H(+). It catalyses the reaction (5Z,8Z,11Z,14Z,17Z)-eicosapentaenoate + reduced [NADPH--hemoprotein reductase] + O2 = (17R,18S)-epoxy-(5Z,8Z,11Z,14Z)-eicosatetraenoate + oxidized [NADPH--hemoprotein reductase] + H2O + H(+). It carries out the reaction (4Z,7Z,10Z,13Z,16Z,19Z)-docosahexaenoate + reduced [NADPH--hemoprotein reductase] + O2 = (19S,20R)-epoxy-(4Z,7Z,10Z,13Z,16Z)-docosapentaenoate + oxidized [NADPH--hemoprotein reductase] + H2O + H(+). The enzyme catalyses (4Z,7Z,10Z,13Z,16Z,19Z)-docosahexaenoate + reduced [NADPH--hemoprotein reductase] + O2 = (19R,20S)-epoxy-(4Z,7Z,10Z,13Z,16Z)-docosapentaenoate + oxidized [NADPH--hemoprotein reductase] + H2O + H(+). The catalysed reaction is all-trans-retinol + reduced [NADPH--hemoprotein reductase] + O2 = all-trans-retinal + oxidized [NADPH--hemoprotein reductase] + 2 H2O + H(+). It catalyses the reaction all-trans-retinal + reduced [NADPH--hemoprotein reductase] + O2 = all-trans-retinoate + oxidized [NADPH--hemoprotein reductase] + H2O + 2 H(+). It carries out the reaction (13S)-hydroperoxy-(9Z,11E)-octadecadienoate = 13-oxo-(9Z,11E)-octadecadienoate + H2O. The enzyme catalyses (12S)-hydroperoxy-(5Z,8Z,10E,14Z)-eicosatetraenoate = 12-oxo-(5Z,8Z,10E,14Z)-eicosatetraenoate + H2O. The catalysed reaction is (15S)-hydroperoxy-(5Z,8Z,11Z,13E)-eicosatetraenoate = 15-oxo-(5Z,8Z,11Z,13E)-eicosatetraenoate + H2O. It catalyses the reaction (5S)-hydroperoxy-(6E,8Z,11Z,14Z)-eicosatetraenoate = 5-oxo-(6E,8Z,11Z,14Z)-eicosatetraenoate + H2O. Its pathway is steroid hormone biosynthesis. It functions in the pathway lipid metabolism; fatty acid metabolism. It participates in cofactor metabolism; retinol metabolism. A cytochrome P450 monooxygenase involved in the metabolism of various endogenous substrates, including fatty acids, steroid hormones and vitamins. Mechanistically, uses molecular oxygen inserting one oxygen atom into a substrate, and reducing the second into a water molecule, with two electrons provided by NADPH via cytochrome P450 reductase (CPR; NADPH-ferrihemoprotein reductase). Catalyzes the hydroxylation of carbon-hydrogen bonds. Exhibits high catalytic activity for the formation of hydroxyestrogens from estrone (E1) and 17beta-estradiol (E2), namely 2-hydroxy E1 and E2, as well as D-ring hydroxylated E1 and E2 at the C15alpha and C16alpha positions. Displays different regioselectivities for polyunsaturated fatty acids (PUFA) hydroxylation. Catalyzes the epoxidation of double bonds of certain PUFA. Converts arachidonic acid toward epoxyeicosatrienoic acid (EET) regioisomers, 8,9-, 11,12-, and 14,15-EET, that function as lipid mediators in the vascular system. Displays an absolute stereoselectivity in the epoxidation of eicosapentaenoic acid (EPA) producing the 17(R),18(S) enantiomer. May play an important role in all-trans retinoic acid biosynthesis in extrahepatic tissues. Catalyzes two successive oxidative transformation of all-trans retinol to all-trans retinal and then to the active form all-trans retinoic acid. May also participate in eicosanoids metabolism by converting hydroperoxide species into oxo metabolites (lipoxygenase-like reaction, NADPH-independent). The sequence is that of Cytochrome P450 1A1 (CYP1A1) from Oryctolagus cuniculus (Rabbit).